A 215-amino-acid polypeptide reads, in one-letter code: Pyrrolidone-carboxylate peptidase (215 aa).

Catalysis depends on residues E81, C144, and H168.

It belongs to the peptidase C15 family. As to quaternary structure, homotetramer.

It localises to the cytoplasm. The catalysed reaction is Release of an N-terminal pyroglutamyl group from a polypeptide, the second amino acid generally not being Pro.. Functionally, removes 5-oxoproline from various penultimate amino acid residues except L-proline. This Bacillus amyloliquefaciens (Bacillus velezensis) protein is Pyrrolidone-carboxylate peptidase (pcp).